We begin with the raw amino-acid sequence, 205 residues long: Large ribosomal subunit protein uL4 (205 aa).

It belongs to the universal ribosomal protein uL4 family. As to quaternary structure, part of the 50S ribosomal subunit.

Its function is as follows. One of the primary rRNA binding proteins, this protein initially binds near the 5'-end of the 23S rRNA. It is important during the early stages of 50S assembly. It makes multiple contacts with different domains of the 23S rRNA in the assembled 50S subunit and ribosome. In terms of biological role, forms part of the polypeptide exit tunnel. The protein is Large ribosomal subunit protein uL4 of Roseobacter denitrificans (strain ATCC 33942 / OCh 114) (Erythrobacter sp. (strain OCh 114)).